Here is a 345-residue protein sequence, read N- to C-terminus: Platelet-derived growth factor C (345 aa).

An N-terminal signal peptide occupies residues 1 to 22 (MLLLGLLLLTSALAGQRTGTRA). The span at 24–33 (SNLSSKLQLS) shows a compositional bias: polar residues. The disordered stretch occupies residues 24 to 45 (SNLSSKLQLSSDKEQNGVQDPR). Asn-25 carries an N-linked (GlcNAc...) asparagine glycan. Positions 34-45 (SDKEQNGVQDPR) are enriched in basic and acidic residues. The region spanning 46 to 163 (HERVVTISGN…PGFCIHYSII (118 aa)) is the CUB domain. Asn-55 carries an N-linked (GlcNAc...) asparagine glycan. Cystine bridges form between Cys-104/Cys-124, Cys-250/Cys-294, Cys-280/Cys-335, and Cys-287/Cys-337.

This sequence belongs to the PDGF/VEGF growth factor family. As to quaternary structure, homodimer; disulfide-linked. Interacts with PDGFRA homodimers, and with heterodimers formed by PDGFRA and PDGFRB. Interacts (via CUB domain) with PLAT (via kringle domain). In terms of processing, proteolytic removal of the N-terminal CUB domain releasing the core domain is necessary for unmasking the receptor-binding epitopes of the core domain. Cleavage after basic residues in the hinge region (region connecting the CUB and growth factor domains) gives rise to the receptor-binding form. Cleaved by PLAT and PLG. Post-translationally, sumoylated with SUMO1. N-glycosylated. Highly expressed in the kidney and adrenal gland. In the kidney, it is expressed in arteriolar smooth muscle cells and in epithelial cells of individual segments (at protein level).

Its subcellular location is the cytoplasm. It localises to the cytosol. It is found in the secreted. The protein resides in the nucleus. The protein localises to the cytoplasmic granule. Its subcellular location is the cell membrane. In terms of biological role, growth factor that plays an essential role in the regulation of embryonic development, cell proliferation, cell migration, survival and chemotaxis. Potent mitogen and chemoattractant for cells of mesenchymal origin. Required for normal skeleton formation during embryonic development, especially for normal development of the craniofacial skeleton and for normal development of the palate. Required for normal skin morphogenesis during embryonic development. Plays an important role in wound healing, where it appears to be involved in three stages: inflammation, proliferation and remodeling. Plays an important role in angiogenesis and blood vessel development. Involved in fibrotic processes, in which transformation of interstitial fibroblasts into myofibroblasts plus collagen deposition occurs. The CUB domain has mitogenic activity in coronary artery smooth muscle cells, suggesting a role beyond the maintenance of the latency of the PDGF domain. In the nucleus, PDGFC seems to have additional function. This chain is Platelet-derived growth factor C (Pdgfc), found in Rattus norvegicus (Rat).